A 124-amino-acid polypeptide reads, in one-letter code: Calvin cycle protein CP12-1, chloroplastic (124 aa).

A chloroplast-targeting transit peptide spans 1 to 47; the sequence is MTTIAAAGLNVATPRVVVRPVARVLGPVRLNYPWKFGSMKRMVVVKA. 2 cysteine pairs are disulfide-bonded: Cys68/Cys77 and Cys110/Cys119. A disordered region spans residues 90–124; sequence AASHARDKKKAGGSDPLEEYCNDNPETDECRTYDN. A compositionally biased stretch (acidic residues) spans 105 to 116; sequence PLEEYCNDNPET.

Belongs to the CP12 family. As to quaternary structure, monomer. Component of a complex that contains two dimers of PRK, two tetramers of GAPDH and CP12. CP12 associates with GAPDH, causing its conformation to change. This GAPDH/CP12 complex binds PRK to form a half-complex (one unit). This unit probably dimerizes due partially to interactions between the enzymes of each unit. In terms of processing, contains two disulfide bonds; only the oxidized protein, with two disulfide bonds, is active in complex formation. The C-terminal disulfide is involved in the interaction with GAPDH and the N-terminal disulfide mediates the binding of PRK with this binary complex. Mostly expressed in flowers, hypocotyl, cotyledons, leaves, stems, and flower stalks. Barely detectable in roots and siliques. Present in root tips and lateral roots. Accumulates in the cotyledons of etiolated seedlings.

It localises to the plastid. It is found in the chloroplast. Acts as a linker essential in the assembly of a core complex of PRK/GAPDH. Coordinates the reversible inactivation of chloroplast enzymes GAPDH and PRK during darkness in photosynthetic tissues. The protein is Calvin cycle protein CP12-1, chloroplastic (CP12-1) of Arabidopsis thaliana (Mouse-ear cress).